The sequence spans 211 residues: Ubiquitin-conjugating enzyme E2 S (211 aa).

One can recognise a UBC core domain in the interval 11–157 (HVIRQVYKEV…ARLMTEIHAH (147 aa)). The Glycyl thioester intermediate role is filled by C95. Residues 157–167 (HSSSLRGKDPT) are compositionally biased toward basic and acidic residues. Residues 157 to 211 (HSSSLRGKDPTDPCSSASVTGALGDGPMAKKHAGDRDKKLAAKKKTDKKRALRRL) form a disordered region. The segment covering 197–211 (AAKKKTDKKRALRRL) has biased composition (basic residues).

The protein belongs to the ubiquitin-conjugating enzyme family.

The enzyme catalyses S-ubiquitinyl-[E1 ubiquitin-activating enzyme]-L-cysteine + [E2 ubiquitin-conjugating enzyme]-L-cysteine = [E1 ubiquitin-activating enzyme]-L-cysteine + S-ubiquitinyl-[E2 ubiquitin-conjugating enzyme]-L-cysteine.. Its pathway is protein modification; protein ubiquitination. In terms of biological role, catalyzes the covalent attachment of ubiquitin to other proteins. Acts as an essential factor of the anaphase promoting complex/cyclosome (APC/C), a cell cycle-regulated ubiquitin ligase that controls progression through mitosis. Acts by specifically elongating 'Lys-11'-linked polyubiquitin chains initiated by the E2 enzyme ube2c/ubch10 on APC/C substrates, enhancing the degradation of APC/C substrates by the proteasome and promoting mitotic exit. The sequence is that of Ubiquitin-conjugating enzyme E2 S (ube2s) from Aquarana catesbeiana (American bullfrog).